Here is a 547-residue protein sequence, read N- to C-terminus: Phosphomethylpyrimidine synthase (547 aa).

Substrate-binding positions include Asn-146, Met-175, Tyr-204, His-240, 260 to 262, 301 to 304, and Glu-340; these read SRG and DGLR. His-344 is a Zn(2+) binding site. Position 367 (Tyr-367) interacts with substrate. His-408 provides a ligand contact to Zn(2+). Positions 488, 491, and 496 each coordinate [4Fe-4S] cluster.

Belongs to the ThiC family. [4Fe-4S] cluster serves as cofactor.

The enzyme catalyses 5-amino-1-(5-phospho-beta-D-ribosyl)imidazole + S-adenosyl-L-methionine = 4-amino-2-methyl-5-(phosphooxymethyl)pyrimidine + CO + 5'-deoxyadenosine + formate + L-methionine + 3 H(+). It participates in cofactor biosynthesis; thiamine diphosphate biosynthesis. Functionally, catalyzes the synthesis of the hydroxymethylpyrimidine phosphate (HMP-P) moiety of thiamine from aminoimidazole ribotide (AIR) in a radical S-adenosyl-L-methionine (SAM)-dependent reaction. The protein is Phosphomethylpyrimidine synthase of Mycobacterium bovis (strain ATCC BAA-935 / AF2122/97).